The sequence spans 223 residues: UPF0173 metal-dependent hydrolase Amet_4625 (223 aa).

The protein belongs to the UPF0173 family.

This is UPF0173 metal-dependent hydrolase Amet_4625 from Alkaliphilus metalliredigens (strain QYMF).